Consider the following 265-residue polypeptide: uncharacterized protein (265 aa).

The segment at 1–160 is disordered; that stretch reads MDKSKNLFDL…STEPVVAAPV (160 aa). Residues 28-42 show a composition bias toward low complexity; that stretch reads AAAAPVAAKKPVAPK. Composition is skewed to basic and acidic residues over residues 73 to 85 and 102 to 119; these read SEER…DSKS and RQFD…ENKK.

The protein belongs to the SERBP1-HABP4 family.

Functionally, ribosome-binding protein that acts as a regulator of mRNA translation by promoting ribosome inactivation. This is an uncharacterized protein from Dictyostelium discoideum (Social amoeba).